The sequence spans 372 residues: 4-hydroxy-3-methylbut-2-en-1-yl diphosphate synthase (flavodoxin) (372 aa).

[4Fe-4S] cluster-binding residues include cysteine 270, cysteine 273, cysteine 305, and glutamate 312.

The protein belongs to the IspG family. The cofactor is [4Fe-4S] cluster.

The enzyme catalyses (2E)-4-hydroxy-3-methylbut-2-enyl diphosphate + oxidized [flavodoxin] + H2O + 2 H(+) = 2-C-methyl-D-erythritol 2,4-cyclic diphosphate + reduced [flavodoxin]. It functions in the pathway isoprenoid biosynthesis; isopentenyl diphosphate biosynthesis via DXP pathway; isopentenyl diphosphate from 1-deoxy-D-xylulose 5-phosphate: step 5/6. In terms of biological role, converts 2C-methyl-D-erythritol 2,4-cyclodiphosphate (ME-2,4cPP) into 1-hydroxy-2-methyl-2-(E)-butenyl 4-diphosphate. The polypeptide is 4-hydroxy-3-methylbut-2-en-1-yl diphosphate synthase (flavodoxin) (Enterobacter sp. (strain 638)).